Reading from the N-terminus, the 115-residue chain is Beta-2-microglobulin (115 aa).

Positions 1–18 (MGLLICSLLLGLLCCSMA) are cleaved as a signal peptide. The Ig-like C1-type domain maps to 23 to 114 (PKVEVYTREP…KSKDHFLMIG (92 aa)).

The protein belongs to the beta-2-microglobulin family. As to quaternary structure, heterodimer of an alpha chain and a beta chain. Beta-2-microglobulin is the beta-chain of major histocompatibility complex class I molecules.

The protein resides in the secreted. Functionally, component of the class I major histocompatibility complex (MHC). Involved in the presentation of peptide antigens to the immune system. The chain is Beta-2-microglobulin (b2m) from Paralichthys olivaceus (Bastard halibut).